A 303-amino-acid polypeptide reads, in one-letter code: Aspartate carbamoyltransferase catalytic subunit (303 aa).

The carbamoyl phosphate site is built by Arg49 and Thr50. Lys77 is an L-aspartate binding site. Arg99, His126, and Gln129 together coordinate carbamoyl phosphate. The L-aspartate site is built by Arg159 and Arg211. Carbamoyl phosphate contacts are provided by Ser252 and Pro253.

The protein belongs to the aspartate/ornithine carbamoyltransferase superfamily. ATCase family. Heterododecamer (2C3:3R2) of six catalytic PyrB chains organized as two trimers (C3), and six regulatory PyrI chains organized as three dimers (R2).

It carries out the reaction carbamoyl phosphate + L-aspartate = N-carbamoyl-L-aspartate + phosphate + H(+). It participates in pyrimidine metabolism; UMP biosynthesis via de novo pathway; (S)-dihydroorotate from bicarbonate: step 2/3. Catalyzes the condensation of carbamoyl phosphate and aspartate to form carbamoyl aspartate and inorganic phosphate, the committed step in the de novo pyrimidine nucleotide biosynthesis pathway. This chain is Aspartate carbamoyltransferase catalytic subunit, found in Listeria welshimeri serovar 6b (strain ATCC 35897 / DSM 20650 / CCUG 15529 / CIP 8149 / NCTC 11857 / SLCC 5334 / V8).